Consider the following 468-residue polypeptide: Effector protein hopD2 (468 aa).

Polar residues predominate over residues 1–20 (MNPLQPIQHSITNSQMSGGQ). Positions 1-35 (MNPLQPIQHSITNSQMSGGQQLEAEGSQAHNSYSH) are disordered. The Tyrosine-protein phosphatase domain occupies 143–468 (DASSPPSAND…TQWRAKIALE (326 aa)). The active-site Phosphocysteine intermediate is C378.

Interacts with EFR and FLS2 (via the kinase and cytoplasmic domains).

It is found in the secreted. The catalysed reaction is O-phospho-L-tyrosyl-[protein] + H2O = L-tyrosyl-[protein] + phosphate. With respect to regulation, inhibited by sodium orthovanadate. Functionally, effector showing tyrosine-phosphatase activity required for host defense suppression. Functions inside plant cells causing suppression of HR (hypersensitive response), PR1 gene expression and oxidative burst probably by interfering with a MAPK (mitogen-activated protein kinase) pathway. MAPK cascades are known to activate defense-related transcription factors. Inhibits plant pattern-recognition receptors (PRRs) activation. This Pseudomonas syringae pv. tomato (strain ATCC BAA-871 / DC3000) protein is Effector protein hopD2 (hopD2).